A 286-amino-acid chain; its full sequence is Probable aquaporin PIP2-5 (286 aa).

Methionine 1 is modified (N-acetylmethionine). The span at 1–18 (MTKEVVGDKRSFSGKDYQ) shows a compositional bias: basic and acidic residues. Residues 1-23 (MTKEVVGDKRSFSGKDYQDPPPE) are disordered. Topologically, residues 1–38 (MTKEVVGDKRSFSGKDYQDPPPEPLFDATELGKWSFYR) are cytoplasmic. Lysine 3 bears the N6,N6-dimethyllysine mark. The helical transmembrane segment at 39 to 59 (ALIAEFIATLLFLYVTIMTVI) threads the bilayer. The Extracellular segment spans residues 60–75 (GYKSQTDPALNPDQCT). The chain crosses the membrane as a helical span at residues 76-96 (GVGVLGIAWAFGGMIFILVYC). The Cytoplasmic segment spans residues 97 to 124 (TAGISGGHINPAVTFGLLLARKVTLVRA). Positions 106–108 (NPA) match the NPA 1 motif. The helical transmembrane segment at 125–145 (VMYMVAQCLGAICGVALVKAF) threads the bilayer. The Extracellular segment spans residues 146 to 165 (QSAYFTRYGGGANGLSDGYS). A helical transmembrane segment spans residues 166-186 (IGTGVAAEIIGTFVLVYTVFS). Topologically, residues 187–200 (ATDPKRSARDSHVP) are cytoplasmic. Residues 201–221 (VLAPLPIGFAVFIVHLATIPI) traverse the membrane as a helical segment. At 222-248 (TGTGINPARSLGAAIIYNKDKAWDHHW) the chain is on the extracellular side. The NPA 2 motif lies at 227-229 (NPA). Residues 249 to 269 (IFWVGPFAGAAIAAFYHQFVL) traverse the membrane as a helical segment. Residues 270–286 (RAGAIKALGSFRSQPHV) lie on the Cytoplasmic side of the membrane. Residues serine 279 and serine 282 each carry the phosphoserine modification.

It belongs to the MIP/aquaporin (TC 1.A.8) family. PIP (TC 1.A.8.11) subfamily. Expressed in green siliques.

The protein localises to the cell membrane. Aquaporins facilitate the transport of water and small neutral solutes across cell membranes. This Arabidopsis thaliana (Mouse-ear cress) protein is Probable aquaporin PIP2-5 (PIP2-5).